The primary structure comprises 407 residues: Immunoglobulin superfamily member 5 (407 aa).

Residues 1-266 (MGQKERSTAD…LGFSLPTWGK (266 aa)) lie on the Extracellular side of the membrane. Ig-like V-type domains are found at residues 39–139 (NEVI…LTVQ) and 142–231 (GELF…ATVN). 4 N-linked (GlcNAc...) asparagine glycosylation sites follow: Asn-59, Asn-103, Asn-210, and Asn-231. Intrachain disulfides connect Cys-60-Cys-123 and Cys-163-Cys-215. The helical transmembrane segment at 267–285 (VGLGLAGTMLLTPTCTLTI) threads the bilayer. Over 286 to 407 (RCCCCRRRCC…PEKVSNTTVV (122 aa)) the chain is Cytoplasmic. The segment covering 320–331 (KSEKEKTNKETE) has biased composition (basic and acidic residues). A disordered region spans residues 320-407 (KSEKEKTNKE…PEKVSNTTVV (88 aa)). Positions 389 to 407 (PQASFNLASPEKVSNTTVV) are enriched in polar residues.

The protein belongs to the immunoglobulin superfamily. In terms of assembly, interacts with MAGI1 at tight junctions, forms a tripartite complex with NPHS1. Interacts with LNX1 isoform 2 via its PDZ 2 domain, it may also interact with other isoforms containing this domain.

Its subcellular location is the apical cell membrane. It is found in the cell junction. The protein localises to the tight junction. Functionally, provides, together with MAGI1, an adhesion machinery at tight junctions, which may regulate the permeability of kidney glomerulus and small intestinal epithelial cells. Mediates calcium-independent homophilic cell adhesion. In testis, it may function as a cell adhesion molecule rather than a tight-junction protein. It may participate in the adhesion between spermatogonia-spermatogonia, spermatogonia-Sertoli cells, and Sertoli cells-Sertoli cells. This Homo sapiens (Human) protein is Immunoglobulin superfamily member 5 (IGSF5).